A 218-amino-acid chain; its full sequence is Thiamine-phosphate synthase (218 aa).

Residues 43–47 and Asn-78 contribute to the 4-amino-2-methyl-5-(diphosphooxymethyl)pyrimidine site; that span reads QFRDK. Residues Asp-79 and Asp-98 each coordinate Mg(2+). 4-amino-2-methyl-5-(diphosphooxymethyl)pyrimidine is bound at residue Ser-117. 143–145 is a 2-[(2R,5Z)-2-carboxy-4-methylthiazol-5(2H)-ylidene]ethyl phosphate binding site; the sequence is TNS. Lys-146 lines the 4-amino-2-methyl-5-(diphosphooxymethyl)pyrimidine pocket. 2-[(2R,5Z)-2-carboxy-4-methylthiazol-5(2H)-ylidene]ethyl phosphate-binding positions include Gly-174 and 194-195; that span reads IS.

The protein belongs to the thiamine-phosphate synthase family. Mg(2+) serves as cofactor.

It catalyses the reaction 2-[(2R,5Z)-2-carboxy-4-methylthiazol-5(2H)-ylidene]ethyl phosphate + 4-amino-2-methyl-5-(diphosphooxymethyl)pyrimidine + 2 H(+) = thiamine phosphate + CO2 + diphosphate. The enzyme catalyses 2-(2-carboxy-4-methylthiazol-5-yl)ethyl phosphate + 4-amino-2-methyl-5-(diphosphooxymethyl)pyrimidine + 2 H(+) = thiamine phosphate + CO2 + diphosphate. It carries out the reaction 4-methyl-5-(2-phosphooxyethyl)-thiazole + 4-amino-2-methyl-5-(diphosphooxymethyl)pyrimidine + H(+) = thiamine phosphate + diphosphate. It functions in the pathway cofactor biosynthesis; thiamine diphosphate biosynthesis; thiamine phosphate from 4-amino-2-methyl-5-diphosphomethylpyrimidine and 4-methyl-5-(2-phosphoethyl)-thiazole: step 1/1. Its function is as follows. Condenses 4-methyl-5-(beta-hydroxyethyl)thiazole monophosphate (THZ-P) and 2-methyl-4-amino-5-hydroxymethyl pyrimidine pyrophosphate (HMP-PP) to form thiamine monophosphate (TMP). The polypeptide is Thiamine-phosphate synthase (Lactococcus lactis subsp. cremoris (strain SK11)).